The following is a 789-amino-acid chain: Bifunctional purine biosynthetic protein PUR2,5 (789 aa).

The interval 1 to 428 (MEKINVLVVG…NRTDIAHRAF (428 aa)) is GARS. The 208-residue stretch at 114–321 (KDFMKKHNIP…LLELMLATVE (208 aa)) folds into the ATP-grasp domain. 140-201 (IANSSHNLVI…EEFLEGDELS (62 aa)) is a binding site for ATP. Positions 291 and 293 each coordinate Mg(2+). The interval 438–773 (LTYEDAGVSV…TVYTIGKLVE (336 aa)) is AIRS.

In the N-terminal section; belongs to the GARS family. It in the C-terminal section; belongs to the AIR synthase family. Mg(2+) is required as a cofactor. Mn(2+) serves as cofactor.

It localises to the cytoplasm. It is found in the cytosol. It catalyses the reaction 2-formamido-N(1)-(5-O-phospho-beta-D-ribosyl)acetamidine + ATP = 5-amino-1-(5-phospho-beta-D-ribosyl)imidazole + ADP + phosphate + H(+). The enzyme catalyses 5-phospho-beta-D-ribosylamine + glycine + ATP = N(1)-(5-phospho-beta-D-ribosyl)glycinamide + ADP + phosphate + H(+). It participates in purine metabolism; IMP biosynthesis via de novo pathway; 5-amino-1-(5-phospho-D-ribosyl)imidazole from N(2)-formyl-N(1)-(5-phospho-D-ribosyl)glycinamide: step 2/2. Its pathway is purine metabolism; IMP biosynthesis via de novo pathway; N(1)-(5-phospho-D-ribosyl)glycinamide from 5-phospho-alpha-D-ribose 1-diphosphate: step 2/2. Its function is as follows. Catalyzes the second and fifth step in the 'de novo' purine biosynthesis pathway; contains phosphoribosylamine--glycine ligase (GARS) and phosphoribosylformylglycinamidine cyclo-ligase (AIRS) activities. This chain is Bifunctional purine biosynthetic protein PUR2,5, found in Pichia angusta (Yeast).